Here is a 265-residue protein sequence, read N- to C-terminus: Undecaprenyl-diphosphatase (265 aa).

The next 7 helical transmembrane spans lie at 42-62 (EAIPISIWLHLGTLLAAIVYF), 90-110 (ISFLLISTALTGIVGLPLLLF), 115-135 (VEISGGSATAVIGIMLIVTGI), 160-182 (VAQGFAAIPGISRSGITMSALLL), 195-215 (FLMSIPAVLVAEIGVGLMGMV), 222-242 (IVGLFFAFAFGLVTIDLFLKV), and 245-265 (KVDFSYFCIGLGVLSVLTMFL).

Belongs to the UppP family.

It localises to the cell membrane. The enzyme catalyses di-trans,octa-cis-undecaprenyl diphosphate + H2O = di-trans,octa-cis-undecaprenyl phosphate + phosphate + H(+). Catalyzes the dephosphorylation of undecaprenyl diphosphate (UPP). The polypeptide is Undecaprenyl-diphosphatase (Methanococcoides burtonii (strain DSM 6242 / NBRC 107633 / OCM 468 / ACE-M)).